The sequence spans 712 residues: Ferric reductase transmembrane component 6 (712 aa).

Residues 1–17 (MHRTLLFLTWLISLTKA) form the signal peptide. The Vacuolar portion of the chain corresponds to 18 to 167 (FNIKLPHTEK…HAHAYNLDIS (150 aa)). 3 N-linked (GlcNAc...) asparagine glycosylation sites follow: Asn89, Asn112, and Asn124. The helical transmembrane segment at 168 to 188 (SVYGAYLTYYFVIVGIIAVFF) threads the bilayer. At 189–244 (HMSHYNGLNRALFASRFVNYIRGHFVLPTFLVDKHANHFKFLNVEVFTGLMPNSLE) the chain is on the cytoplasmic side. A helical transmembrane segment spans residues 245–265 (AWIIFGYTLANIIFLSISYII). Over 266–287 (DPYNLIFNSHLSQFTRLLADRS) the chain is Vacuolar. The Ferric oxidoreductase domain occupies 287-411 (SGILAFTQFP…YCCWQHVKIF (125 aa)). Residues 288 to 308 (GILAFTQFPLIIIFTARNSFL) traverse the membrane as a helical segment. Residues 309–328 (EFLTGVKFNSFISFHKWIGR) lie on the Cytoplasmic side of the membrane. 2 residues coordinate heme: His323 and His337. A helical membrane pass occupies residues 329 to 349 (IMVLNATIHSLSYSLFAIINH). Residues 350 to 360 (AFKISNKQLYW) are Vacuolar-facing. A helical membrane pass occupies residues 361-381 (KFGIASITVLCVLLVLSLGIV). Over 382–387 (RKRHYE) the chain is Cytoplasmic. The helical transmembrane segment at 388 to 408 (FFLYTHIILALLFFYCCWQHV) threads the bilayer. Heme-binding residues include His393 and His407. Topologically, residues 409–416 (KIFNGWKE) are vacuolar. The FAD-binding FR-type domain occupies 412–546 (NGWKEWIVVS…EGPYGPSNLH (135 aa)). The helical transmembrane segment at 417-437 (WIVVSLLIWGLEKLFRIWNIL) threads the bilayer. Over 438-712 (QFRFPKATLI…IEYFEEYQCW (275 aa)) the chain is Cytoplasmic. Residue 493 to 499 (HPFTIID) coordinates FAD. Residues 538 to 541 (GPYG) and 678 to 679 (CG) each bind NADP(+).

This sequence belongs to the ferric reductase (FRE) family. It depends on FAD as a cofactor.

The protein localises to the vacuole membrane. The enzyme catalyses 2 a Fe(II)-siderophore + NADP(+) + H(+) = 2 a Fe(III)-siderophore + NADPH. In terms of biological role, metalloreductase responsible for reducing vacuolar iron and copper prior to transport into the cytosol. Catalyzes the reduction of Fe(3+) to Fe(2+) and Cu(2+) to Cu(+), respectively, which can then be transported by the respective vacuolar efflux systems to the cytosol. The protein is Ferric reductase transmembrane component 6 (FRE6) of Saccharomyces cerevisiae (strain ATCC 204508 / S288c) (Baker's yeast).